A 220-amino-acid polypeptide reads, in one-letter code: uncharacterized protein (220 aa).

The interval 1–50 is disordered; that stretch reads MTDDVRDVNTETTDATEVAEIDSAAGEAGDSATEAFDTDSATESTAQKGQ. Over residues 39 to 48 the composition is skewed to polar residues; sequence DSATESTAQK. A helical transmembrane segment spans residues 65-85; sequence VPVILILLMLISGGATGWLYL.

This sequence to M.tuberculosis Rv1363c.

The protein localises to the membrane. This is an uncharacterized protein from Mycobacterium tuberculosis (strain CDC 1551 / Oshkosh).